We begin with the raw amino-acid sequence, 65 residues long: MPKMKTHRGAAKRFKKTGSGKLKRAKAFKSHILTKKSSKTKRNLRKSGLVSEAQEKVMKKLLPYL.

Residues methionine 1–lysine 26 form a disordered region.

The protein belongs to the bacterial ribosomal protein bL35 family.

The chain is Large ribosomal subunit protein bL35 from Clostridium novyi (strain NT).